A 290-amino-acid chain; its full sequence is 4-hydroxybenzoate octaprenyltransferase (290 aa).

Transmembrane regions (helical) follow at residues isoleucine 21–methionine 41, leucine 44–isoleucine 64, leucine 97–valine 117, phenylalanine 143–valine 163, tryptophan 168–valine 188, glutamate 211–glycine 231, leucine 235–isoleucine 255, and asparagine 270–leucine 290.

It belongs to the UbiA prenyltransferase family. Requires Mg(2+) as cofactor.

It is found in the cell inner membrane. The enzyme catalyses all-trans-octaprenyl diphosphate + 4-hydroxybenzoate = 4-hydroxy-3-(all-trans-octaprenyl)benzoate + diphosphate. It functions in the pathway cofactor biosynthesis; ubiquinone biosynthesis. Its function is as follows. Catalyzes the prenylation of para-hydroxybenzoate (PHB) with an all-trans polyprenyl group. Mediates the second step in the final reaction sequence of ubiquinone-8 (UQ-8) biosynthesis, which is the condensation of the polyisoprenoid side chain with PHB, generating the first membrane-bound Q intermediate 3-octaprenyl-4-hydroxybenzoate. This chain is 4-hydroxybenzoate octaprenyltransferase, found in Shewanella amazonensis (strain ATCC BAA-1098 / SB2B).